Here is a 110-residue protein sequence, read N- to C-terminus: Large ribosomal subunit protein uL22 (110 aa).

The protein belongs to the universal ribosomal protein uL22 family. As to quaternary structure, part of the 50S ribosomal subunit.

This protein binds specifically to 23S rRNA; its binding is stimulated by other ribosomal proteins, e.g. L4, L17, and L20. It is important during the early stages of 50S assembly. It makes multiple contacts with different domains of the 23S rRNA in the assembled 50S subunit and ribosome. In terms of biological role, the globular domain of the protein is located near the polypeptide exit tunnel on the outside of the subunit, while an extended beta-hairpin is found that lines the wall of the exit tunnel in the center of the 70S ribosome. The chain is Large ribosomal subunit protein uL22 from Salmonella arizonae (strain ATCC BAA-731 / CDC346-86 / RSK2980).